The primary structure comprises 230 residues: UPF0502 protein Patl_1161 (230 aa).

It belongs to the UPF0502 family.

In Pseudoalteromonas atlantica (strain T6c / ATCC BAA-1087), this protein is UPF0502 protein Patl_1161.